A 353-amino-acid polypeptide reads, in one-letter code: MKATRSAPRERERSRTTSGSDQVHSWILVPSQVLHAVWRIARASVMTALSLLSATLSYFRSLYLYLGHQLKWWIGYLQRKFKRNLSVEAEVDLLSYCAREWKGETPRARLMRKAYEELFWRYHVKCVRPVKRDNYDALRSVLFQIFSQGLSFPSWMKEKDIVKLPEKLLFSQGCNWIQQYSFGPEKYTGSNVFGKLRKCVELLKLQWTEFSGMRDYHKRGSMCNSLFSDAILECKLYEALKFLMLYQVTEVYEQMKTNKIVPSLFRLLFSRESSPDPLSFMMNHLNSIGDTCGLDQIDMFILGYSLQVKIKVFRLFKFNSRDFAVYYPEEPLREWPEISLLTENDHQYHIPVF.

The tract at residues 1 to 80 is required for membrane binding; that stretch reads MKATRSAPRE…KWWIGYLQRK (80 aa). Residues 125-353 enclose the OTU domain; sequence KCVRPVKRDN…NDHQYHIPVF (229 aa).

The protein belongs to the peptidase C65 family. Otulin subfamily. In terms of assembly, does not bind ubiquitin or ubiquitin-like proteins.

Its subcellular location is the cytoplasm. It localises to the endoplasmic reticulum membrane. The protein resides in the nucleus envelope. In terms of biological role, lacks deubiquitinase activity. In Rattus norvegicus (Rat), this protein is Inactive ubiquitin thioesterase OTULINL.